The sequence spans 962 residues: MTKQTLTQLEQHDLFLRRHIGPDSSQQQEMLNYVGAESLDDLTAQIVPESIRLSQELSIGDSCGEAEGIAYIRGLAKQNQVFKSYIGMGYYGTQVPNVILRNVLENPGWYTAYTPYQPEIAQGRLEAILNFQQVSMDLTGLDLASASLLDEATAAAEAMALAKRVSKAKKANIFFVADDVFPQTLDVVKTRAECFGFEVVVGPASEAVNHELFGALFQYSNRFGQITDFTDLFAELRAKNVIVTVAADIMSLVLLKSPGSMGADVVFGSAQRFGVPMGFGGPHAAFFVARDEHKRSMPGRIIGVSKDTRGNRALRMAMQTREQHIRREKANSNICTAQILLANMASFYAVFHGPQGLKTIASRINRFADILAAGLQAKGVSLVNNTWFDTISIKGLDVAAVNARALAAEMNLRFDADGIVGVSLDETTIRTDIDALFEVILGAGHGLDVAALDAQIVAQGSQSIPASLVREDAILSHPTFNRYQSETEMMRYIKRLESKDLALNYSMISLGSCTMKLNAAVEMIPVSWPEFANMHPFCPLDQAKGYTQLIEELSSWLVNVTGYDAVCIQPNSGAQGEYAGLLAIRKYHESRGEAHRNICLIPQSAHGTNPASAQLAGMQVVVTACDKQGNVDLEDLKAKAAEVAENLSCIMITYPSTHGVYEETVREICNIVHQHGGQVYLDGANMNAQVGLTSPGFIGADVSHLNLHKTFAIPHGGGGPGMGPIGVKAHLAPFVAGHVVVKPGRESDNNGAVSAAPYGSAGILPISWMYIKLLGSKGLKKSTQTALLNANYVMKKLSEHYPVLFRGRNDRVAHECIIDLRPIKEASGVTEMDIAKRLNDYGFHAPTMSFPVAGTLMIEPTESESKVELDRFIDAMVSIRAEIAKVEAGEWPADNNPLHNAPHTMADIMDSAFDSRPYSREVAVFPSAAVRTNKFWPTVNRIDDVYGDRNLFCACVPLSDYE.

Position 709 is an N6-(pyridoxal phosphate)lysine (K709).

The protein belongs to the GcvP family. As to quaternary structure, the glycine cleavage system is composed of four proteins: P, T, L and H. Pyridoxal 5'-phosphate is required as a cofactor.

The catalysed reaction is N(6)-[(R)-lipoyl]-L-lysyl-[glycine-cleavage complex H protein] + glycine + H(+) = N(6)-[(R)-S(8)-aminomethyldihydrolipoyl]-L-lysyl-[glycine-cleavage complex H protein] + CO2. Functionally, the glycine cleavage system catalyzes the degradation of glycine. The P protein binds the alpha-amino group of glycine through its pyridoxal phosphate cofactor; CO(2) is released and the remaining methylamine moiety is then transferred to the lipoamide cofactor of the H protein. The polypeptide is Glycine dehydrogenase (decarboxylating) (Shewanella oneidensis (strain ATCC 700550 / JCM 31522 / CIP 106686 / LMG 19005 / NCIMB 14063 / MR-1)).